The sequence spans 302 residues: Cyclin-dependent kinase 1-B (302 aa).

The region spanning Tyr-4–Phe-287 is the Protein kinase domain. Residues Ile-10–Val-18 and Lys-33 each bind ATP. Thr-14 is modified (phosphothreonine). Position 15 is a phosphotyrosine; by wee1 and wee2 (Tyr-15). Asp-128 functions as the Proton acceptor in the catalytic mechanism. Residue Thr-161 is modified to Phosphothreonine; by cak. Ser-277 is modified (phosphoserine).

It belongs to the protein kinase superfamily. CMGC Ser/Thr protein kinase family. CDC2/CDKX subfamily. In terms of assembly, forms a stable but non-covalent complex with a regulatory subunit and with a cyclin. Interacts with spdya. Post-translationally, phosphorylation at Tyr-15 by wee1 and wee2 inhibits the protein kinase activity and acts negative regulator of entry into mitosis (G2 to M transition).

The protein localises to the nucleus. It carries out the reaction L-seryl-[protein] + ATP = O-phospho-L-seryl-[protein] + ADP + H(+). The enzyme catalyses L-threonyl-[protein] + ATP = O-phospho-L-threonyl-[protein] + ADP + H(+). The catalysed reaction is [DNA-directed RNA polymerase] + ATP = phospho-[DNA-directed RNA polymerase] + ADP + H(+). Its activity is regulated as follows. Phosphorylation at Thr-14 or Tyr-15 inactivates the enzyme, while phosphorylation at Thr-161 activates it. Functionally, plays a key role in the control of the eukaryotic cell cycle by modulating the centrosome cycle as well as mitotic onset; promotes G2-M transition via association with multiple interphase cyclins. During G2 and early mitosis, CDC25A/B/C-mediated dephosphorylation activates CDK1/cyclin complexes which phosphorylate several substrates that trigger at least centrosome separation, Golgi dynamics, nuclear envelope breakdown and chromosome condensation. Once chromosomes are condensed and aligned at the metaphase plate, CDK1 activity is switched off by WEE1- and PKMYT1-mediated phosphorylation to allow sister chromatid separation, chromosome decondensation, reformation of the nuclear envelope and cytokinesis. Catalyzes lamin (LMNA, LMNB1 and LMNB2) phosphorylation at the onset of mitosis, promoting nuclear envelope breakdown. The sequence is that of Cyclin-dependent kinase 1-B (cdk1-b) from Xenopus laevis (African clawed frog).